We begin with the raw amino-acid sequence, 242 residues long: Putative ABC transporter ATP-binding protein TTE0246 (242 aa).

An ABC transporter domain is found at 5–242 (FELKNVSYFY…EKLLLKANLI (238 aa)). Residue 38–45 (GANGSGKS) coordinates ATP.

The protein belongs to the ABC transporter superfamily.

The protein localises to the cell membrane. Functionally, probably part of an ABC transporter complex. Responsible for energy coupling to the transport system. The chain is Putative ABC transporter ATP-binding protein TTE0246 from Caldanaerobacter subterraneus subsp. tengcongensis (strain DSM 15242 / JCM 11007 / NBRC 100824 / MB4) (Thermoanaerobacter tengcongensis).